Consider the following 513-residue polypeptide: L-threonine dehydratase biosynthetic IlvA (513 aa).

At Lys-63 the chain carries N6-(pyridoxal phosphate)lysine. Pyridoxal 5'-phosphate-binding positions include Asn-90, 189–193 (GGGGL), and Ser-316. ACT-like domains follow at residues 340–411 (ALLA…DMSD) and 433–504 (RLYT…DVTK).

Belongs to the serine/threonine dehydratase family. As to quaternary structure, homotetramer. Pyridoxal 5'-phosphate is required as a cofactor.

It catalyses the reaction L-threonine = 2-oxobutanoate + NH4(+). It participates in amino-acid biosynthesis; L-isoleucine biosynthesis; 2-oxobutanoate from L-threonine: step 1/1. Its function is as follows. Catalyzes the anaerobic formation of alpha-ketobutyrate and ammonia from threonine in a two-step reaction. The first step involved a dehydration of threonine and a production of enamine intermediates (aminocrotonate), which tautomerizes to its imine form (iminobutyrate). Both intermediates are unstable and short-lived. The second step is the nonenzymatic hydrolysis of the enamine/imine intermediates to form 2-ketobutyrate and free ammonia. In the low water environment of the cell, the second step is accelerated by RidA. This chain is L-threonine dehydratase biosynthetic IlvA (ilvA), found in Haemophilus influenzae (strain ATCC 51907 / DSM 11121 / KW20 / Rd).